The primary structure comprises 605 residues: Glutamine--fructose-6-phosphate aminotransferase [isomerizing] (605 aa).

The active-site Nucleophile; for GATase activity is cysteine 2. A Glutamine amidotransferase type-2 domain is found at 2–220 (CGIVGVTGKD…DGEIVVVKPD (219 aa)). 2 consecutive SIS domains span residues 286–426 (LLTA…VDQP) and 458–595 (AKSA…VDKP). Lysine 600 functions as the For Fru-6P isomerization activity in the catalytic mechanism.

Homodimer.

It is found in the cytoplasm. The catalysed reaction is D-fructose 6-phosphate + L-glutamine = D-glucosamine 6-phosphate + L-glutamate. Catalyzes the first step in hexosamine metabolism, converting fructose-6P into glucosamine-6P using glutamine as a nitrogen source. This chain is Glutamine--fructose-6-phosphate aminotransferase [isomerizing], found in Lactiplantibacillus plantarum (strain ATCC BAA-793 / NCIMB 8826 / WCFS1) (Lactobacillus plantarum).